The primary structure comprises 324 residues: Beta-ketoacyl-[acyl-carrier-protein] synthase III (324 aa).

Catalysis depends on residues cysteine 114 and histidine 251. Residues 252 to 256 (QANQR) form an ACP-binding region. Residue asparagine 281 is part of the active site.

It belongs to the thiolase-like superfamily. FabH family. Homodimer.

Its subcellular location is the cytoplasm. The catalysed reaction is malonyl-[ACP] + acetyl-CoA + H(+) = 3-oxobutanoyl-[ACP] + CO2 + CoA. It functions in the pathway lipid metabolism; fatty acid biosynthesis. In terms of biological role, catalyzes the condensation reaction of fatty acid synthesis by the addition to an acyl acceptor of two carbons from malonyl-ACP. Catalyzes the first condensation reaction which initiates fatty acid synthesis and may therefore play a role in governing the total rate of fatty acid production. Possesses both acetoacetyl-ACP synthase and acetyl transacylase activities. Its substrate specificity determines the biosynthesis of branched-chain and/or straight-chain of fatty acids. In Rhodospirillum rubrum (strain ATCC 11170 / ATH 1.1.1 / DSM 467 / LMG 4362 / NCIMB 8255 / S1), this protein is Beta-ketoacyl-[acyl-carrier-protein] synthase III.